A 60-amino-acid chain; its full sequence is Large ribosomal subunit protein bL32 (60 aa).

Residues 1–60 (MAVQQNKKSRSARDMRRSHDALEPNALSVEKSTGEVHLRHHVSPDGFYRGRKVIDKGADE) are disordered. Residues 11–22 (SARDMRRSHDAL) show a composition bias toward basic and acidic residues.

This sequence belongs to the bacterial ribosomal protein bL32 family.

The sequence is that of Large ribosomal subunit protein bL32 from Stutzerimonas stutzeri (strain A1501) (Pseudomonas stutzeri).